The sequence spans 173 residues: RNA 2',3'-cyclic phosphodiesterase (173 aa).

Residue His38 is the Proton donor of the active site. 2 short sequence motifs (HXTX) span residues 38 to 41 (HITV) and 118 to 121 (HLTI). Catalysis depends on His118, which acts as the Proton acceptor.

This sequence belongs to the 2H phosphoesterase superfamily. ThpR family.

It carries out the reaction a 3'-end 2',3'-cyclophospho-ribonucleotide-RNA + H2O = a 3'-end 2'-phospho-ribonucleotide-RNA + H(+). Hydrolyzes RNA 2',3'-cyclic phosphodiester to an RNA 2'-phosphomonoester. The protein is RNA 2',3'-cyclic phosphodiesterase of Methanocaldococcus jannaschii (strain ATCC 43067 / DSM 2661 / JAL-1 / JCM 10045 / NBRC 100440) (Methanococcus jannaschii).